Reading from the N-terminus, the 717-residue chain is CRISPR-associated protein Cas8b (717 aa).

Disordered stretches follow at residues 263-283 (IGVF…DQSW) and 698-717 (HEKE…STTN). Residues 701 to 717 (EDEDDQDTEEPAESTTN) are compositionally biased toward acidic residues.

It localises to the cytoplasm. Functionally, CRISPR (clustered regularly interspaced short palindromic repeat) is an adaptive immune system that provides protection against mobile genetic elements (viruses, transposable elements and conjugative plasmids). CRISPR clusters contain sequences complementary to antecedent mobile elements and target invading nucleic acids. CRISPR clusters are transcribed and processed into CRISPR RNA (crRNA). Plasmid targeted by CRISPR locus P1 transform wild-type cells very poorly. This subunit might be involved in stabilizing crRNA. This Haloferax volcanii (strain ATCC 29605 / DSM 3757 / JCM 8879 / NBRC 14742 / NCIMB 2012 / VKM B-1768 / DS2) (Halobacterium volcanii) protein is CRISPR-associated protein Cas8b.